The primary structure comprises 368 residues: Chorismate synthase (368 aa).

NADP(+) is bound at residue Arg-46. FMN-binding positions include 124-126 (RAS), Gly-284, 299-303 (KPTPS), and Arg-326.

The protein belongs to the chorismate synthase family. Requires FMNH2 as cofactor.

The catalysed reaction is 5-O-(1-carboxyvinyl)-3-phosphoshikimate = chorismate + phosphate. The protein operates within metabolic intermediate biosynthesis; chorismate biosynthesis; chorismate from D-erythrose 4-phosphate and phosphoenolpyruvate: step 7/7. Catalyzes the anti-1,4-elimination of the C-3 phosphate and the C-6 proR hydrogen from 5-enolpyruvylshikimate-3-phosphate (EPSP) to yield chorismate, which is the branch point compound that serves as the starting substrate for the three terminal pathways of aromatic amino acid biosynthesis. This reaction introduces a second double bond into the aromatic ring system. The polypeptide is Chorismate synthase (Pyrobaculum aerophilum (strain ATCC 51768 / DSM 7523 / JCM 9630 / CIP 104966 / NBRC 100827 / IM2)).